The following is a 481-amino-acid chain: Palmitoyltransferase PFA4 (481 aa).

Residues 1–22 are disordered; the sequence is MTNQDPDDGAYPSSQSDDDGIE. Topologically, residues 1 to 66 are cytoplasmic; the sequence is MTNQDPDDGA…APLTGRRRTP (66 aa). A helical transmembrane segment spans residues 67–87; that stretch reads LSWTEVIWVSLTLLLIAVLGY. At 88–108 the chain is on the lumenal side; sequence SSQLYVMLPYYEKTPSFSPQA. Residues 109–129 form a helical membrane-spanning segment; the sequence is LAAVLVPFNLGLLAIYYNYWL. Over 130–223 the chain is Cytoplasmic; that stretch reads CVTTDAGSVP…LANCVGHFNH (94 aa). A DHHC domain is found at 181–231; it reads RYCKTCSAFKPPRSHHCKTCQRCVLRMDHHCPWLANCVGHFNHAHFIRFLF. Cys-211 acts as the S-palmitoyl cysteine intermediate in catalysis. The helical transmembrane segment at 224-244 threads the bilayer; the sequence is AHFIRFLFYVDVTCLYHLIMI. Residues 245–265 are Lumenal-facing; sequence SCRVLDSFNSYTYWREPCARE. Residues 266-286 traverse the membrane as a helical segment; sequence LVWLVVNYALCIPVILLVGIF. Residues 287–481 are Cytoplasmic-facing; that stretch reads SLYHFYCLAV…EVRPHTPWSV (195 aa). Residues 370-481 are disordered; that stretch reads SQYRWPPKDP…EVRPHTPWSV (112 aa). The segment covering 418–431 has biased composition (low complexity); that stretch reads SSPSSSDSHSSLHL. Basic and acidic residues-rich tracts occupy residues 441–452 and 466–475; these read LPHHFDPPHDPD and RGSEGYEVRP.

It belongs to the DHHC palmitoyltransferase family. PFA4 subfamily.

It is found in the endoplasmic reticulum membrane. It carries out the reaction L-cysteinyl-[protein] + hexadecanoyl-CoA = S-hexadecanoyl-L-cysteinyl-[protein] + CoA. Its function is as follows. Mediates the reversible addition of palmitate to target proteins, thereby regulating their membrane association and biological function. The protein is Palmitoyltransferase PFA4 of Mycosarcoma maydis (Corn smut fungus).